Here is a 970-residue protein sequence, read N- to C-terminus: Protein bicaudal C homolog 1-B (970 aa).

The segment at 1 to 50 is disordered; it reads MAAQCGGYMNQSDPGSNSERSADSPLPGSEDDSPGSAAPHDPEWREERFR. Over residues 9–19 the composition is skewed to polar residues; the sequence is MNQSDPGSNSE. Over residues 40–50 the composition is skewed to basic and acidic residues; it reads HDPEWREERFR. KH domains lie at 130 to 197 and 282 to 346; these read RVTL…RVRI and PVST…RQYL. Residues 596–605 are compositionally biased toward polar residues; that stretch reads EASRQSNNHS. 3 disordered regions span residues 596-638, 677-696, and 773-841; these read EASR…SANT, SDSE…APGS, and RRAN…NKSA. Over residues 606-616 the composition is skewed to basic and acidic residues; that stretch reads SAEEVNSKTDS. Composition is skewed to polar residues over residues 783–810 and 819–831; these read TMST…GSDS and IDSS…SSIG. The 64-residue stretch at 869 to 932 folds into the SAM domain; that stretch reads FKGSDLPELF…LLAISELNKN (64 aa).

It belongs to the BicC family.

In terms of biological role, putative RNA-binding protein. May be involved in regulating gene expression during embryonic development. Seems to be involved in endoderm formation. Ectopic expression results in endoderm formation in the absence of mesoderm induction. This chain is Protein bicaudal C homolog 1-B (bicc1-b), found in Xenopus laevis (African clawed frog).